The chain runs to 677 residues: uncharacterized protein (677 aa).

Transmembrane regions (helical) follow at residues 80–102 (ILSL…RASF), 338–360 (ALLS…LFGF), and 367–386 (LVAM…LLSL). Residues 523–556 (DEAASLPSDSSPEEDLDPLEEVESIEGTAEESTR) are disordered. Over residues 533–546 (SPEEDLDPLEEVES) the composition is skewed to acidic residues.

Its subcellular location is the cell membrane. This is an uncharacterized protein from Treponema pallidum (strain Nichols).